The chain runs to 492 residues: ERAD-associated E3 ubiquitin-protein ligase HRD1A (492 aa).

Topologically, residues 1–3 are cytoplasmic; the sequence is MIR. A helical membrane pass occupies residues 4–24; that stretch reads LRTYAGLSFMATLAVIYHAFS. At 25-40 the chain is on the lumenal side; the sequence is SRGQFYPATVYLSTSK. Residues 41 to 61 traverse the membrane as a helical segment; the sequence is ISLVLLLNMCLVLMLSLWHLV. Residues 62–98 lie on the Cytoplasmic side of the membrane; the sequence is KFVFLGSLREAEVERLNEQAWRELMEILFAITIFRQD. The chain crosses the membrane as a helical span at residues 99–119; that stretch reads FSSGFLPLVVTLLLIKALHWL. Residues 120–135 lie on the Lumenal side of the membrane; that stretch reads AQKRVEYIETTPSVSK. The helical transmembrane segment at 136 to 156 threads the bilayer; it reads LSHFRIVSFMGFLLLVDSLFM. Topologically, residues 157 to 170 are cytoplasmic; that stretch reads YSSIRHLIQSRQAS. The chain crosses the membrane as a helical span at residues 171–191; sequence VSLFFSFEYMILATTTVAIFV. Topologically, residues 192–221 are lumenal; sequence KYVFYVTDMLMDGQWEKKPVYTFYLELIRD. The chain crosses the membrane as a helical span at residues 222-242; that stretch reads LLHLSMYICFFFVIFMNYGVP. Residues 243-492 lie on the Cytoplasmic side of the membrane; sequence LHLLRELYET…KGKSVADAAE (250 aa). An RING-type; atypical zinc finger spans residues 292-330; it reads CIICREEMTNAKKLICGHLFHVHCLRSWLERQQTCPTCR. Disordered stretches follow at residues 339–379 and 470–492; these read ATSA…NSLS and ETRKPESAGEPENKGKSVADAAE. The segment covering 351–378 has biased composition (low complexity); that stretch reads QGSQQGTSSSGNQGSEISSSAGVSNNSL. Basic and acidic residues predominate over residues 470-486; sequence ETRKPESAGEPENKGKS.

It belongs to the HRD1 family.

Its subcellular location is the endoplasmic reticulum membrane. The enzyme catalyses S-ubiquitinyl-[E2 ubiquitin-conjugating enzyme]-L-cysteine + [acceptor protein]-L-lysine = [E2 ubiquitin-conjugating enzyme]-L-cysteine + N(6)-ubiquitinyl-[acceptor protein]-L-lysine.. It participates in protein modification; protein ubiquitination. In terms of biological role, probable component of the HRD1 ubiquitin ligase complex that mediates the rapid degradation of misfolded endoplasmic reticulum (ER) proteins, a process called ER-associated degradation (ERAD). Targets the misfolded LRR receptor kinase BRI1. Functions redundantly with HRD3B. The sequence is that of ERAD-associated E3 ubiquitin-protein ligase HRD1A from Arabidopsis thaliana (Mouse-ear cress).